The sequence spans 250 residues: Bis(5'-nucleosyl)-tetraphosphatase PrpE [asymmetrical] (250 aa).

This sequence belongs to the PrpE family. The cofactor is Ni(2+).

It catalyses the reaction P(1),P(4)-bis(5'-guanosyl) tetraphosphate + H2O = GMP + GTP + 2 H(+). Its function is as follows. Asymmetrically hydrolyzes Ap4p to yield AMP and ATP. This chain is Bis(5'-nucleosyl)-tetraphosphatase PrpE [asymmetrical], found in Oceanobacillus iheyensis (strain DSM 14371 / CIP 107618 / JCM 11309 / KCTC 3954 / HTE831).